Reading from the N-terminus, the 114-residue chain is Chaperone protein YscY (114 aa).

As to quaternary structure, binds to YscX.

The protein resides in the cytoplasm. Its function is as follows. Required for Yop secretion. Functions probably as a chaperone which stabilizes YscX within the cell, before its secretion. The sequence is that of Chaperone protein YscY (yscY) from Yersinia enterocolitica serotype O:8 / biotype 1B (strain NCTC 13174 / 8081).